A 363-amino-acid chain; its full sequence is 3-isopropylmalate dehydrogenase (363 aa).

Residue 79 to 92 (GPKWEHLPPNDQPE) coordinates NAD(+). Positions 100, 110, 139, and 228 each coordinate substrate. Mg(2+) is bound by residues Asp228, Asp252, and Asp256. 286–298 (GSAPDIAGKNIAN) contacts NAD(+).

The protein belongs to the isocitrate and isopropylmalate dehydrogenases family. LeuB type 1 subfamily. As to quaternary structure, homodimer. Mg(2+) serves as cofactor. Requires Mn(2+) as cofactor.

It localises to the cytoplasm. It catalyses the reaction (2R,3S)-3-isopropylmalate + NAD(+) = 4-methyl-2-oxopentanoate + CO2 + NADH. It participates in amino-acid biosynthesis; L-leucine biosynthesis; L-leucine from 3-methyl-2-oxobutanoate: step 3/4. Its function is as follows. Catalyzes the oxidation of 3-carboxy-2-hydroxy-4-methylpentanoate (3-isopropylmalate) to 3-carboxy-4-methyl-2-oxopentanoate. The product decarboxylates to 4-methyl-2 oxopentanoate. This Aliivibrio fischeri (strain ATCC 700601 / ES114) (Vibrio fischeri) protein is 3-isopropylmalate dehydrogenase.